Consider the following 422-residue polypeptide: MKLLLQNQNIFQKLKNTLNGCIKKFYDTYQDLEQMQKFEMIVEDKLLFRYSCSQSEMFSAQIQAHYLEKRVLQLTDGNVKYIVNFRDKGVLDKANFFDTPNNSLVIIRQWSYEIYYTKNTFQINLVIDEMRCIDIITTIFYCKLELDFTQGIKGISKSSSFSNQIYEYSAQYYKAIQLLKKLLINDSYISELYNSTKSKQQPRLFIFQSFKPKMNLAEQNLSRQFEQCQQDDFGDGCLLQIVNYTHQSLKQIENKNNSNQIVNGQNEISKKKRVLKSNEDLYKISLQKQLKIFQEEEIELHSQSTIRNQTNQQLETFESDTSKRNSEKILHSINELNTSKQKVNQMNSSQHQIQKLENNNLNKNILNQINENDIKNELEERQQQHLTQSFNSKAQLKKIITLKKNQDILLFKPQEQEGSKKY.

Component of the telomerase holoenzyme complex, composed of the catalytic core (the catalytic subunit TERT, the telomerase RNA template component TER and TAP65/p65), which is associated with two heterotrimeric subcomplexes: (i) the replication protein A (RPA)-related subcomplex, composed of TEB1, RPA2/TEB2 and RPA3/TEB3 and (ii) the CST-like subcomplex, composed of TAP75/p75, TAP45/p45 and TAP19/p19. TEB1 and the CST-like subcomplex are tethered to the catalytic core by TAP50/p50.

Its subcellular location is the chromosome. It is found in the telomere. Functionally, tethering component of the holoenzyme telomerase ribonucleoprotein (RNP) complex. Telomerase is an essential ribonucleoprotein enzyme that copies new telomeric repeats onto chromosome ends by repetitively synthesizing the short telomere-repeat sequence 5'-TTGGGG-3' using an RNA template component TER. In the telomerase holoenzyme complex, acts as a hub that anchors the two heterotrimeric subcomplexes with the catalytic core. This is Telomerase-associated protein of 50 kDa from Tetrahymena thermophila (strain SB210).